The following is a 265-amino-acid chain: Hydroxyethylthiazole kinase (265 aa).

Residue M50 coordinates substrate. ATP is bound by residues R125 and T171. Residue G198 participates in substrate binding.

It belongs to the Thz kinase family. It depends on Mg(2+) as a cofactor.

It carries out the reaction 5-(2-hydroxyethyl)-4-methylthiazole + ATP = 4-methyl-5-(2-phosphooxyethyl)-thiazole + ADP + H(+). It participates in cofactor biosynthesis; thiamine diphosphate biosynthesis; 4-methyl-5-(2-phosphoethyl)-thiazole from 5-(2-hydroxyethyl)-4-methylthiazole: step 1/1. Functionally, catalyzes the phosphorylation of the hydroxyl group of 4-methyl-5-beta-hydroxyethylthiazole (THZ). The sequence is that of Hydroxyethylthiazole kinase from Salmonella agona (strain SL483).